A 147-amino-acid polypeptide reads, in one-letter code: uncharacterized protein (147 aa).

The next 2 helical transmembrane spans lie at Tyr4–Gly26 and Tyr123–Phe145.

It localises to the cell membrane. This is an uncharacterized protein from Treponema pallidum (strain Nichols).